The chain runs to 521 residues: Acidic amino acid decarboxylase GADL1 (521 aa).

Lys-333 bears the N6-(pyridoxal phosphate)lysine mark.

It belongs to the group II decarboxylase family. As to quaternary structure, homodimer. The cofactor is pyridoxal 5'-phosphate. As to expression, expressed very weakly in neurons and not detected in astrocytes, brain or liver.

It catalyses the reaction L-aspartate + H(+) = beta-alanine + CO2. It carries out the reaction 3-sulfino-L-alanine + H(+) = hypotaurine + CO2. The catalysed reaction is L-cysteate + H(+) = taurine + CO2. May catalyze the decarboxylation of L-aspartate, 3-sulfino-L-alanine (cysteine sulfinic acid), and L-cysteate to beta-alanine, hypotaurine and taurine, respectively. Does not exhibit any decarboxylation activity toward glutamate. This is Acidic amino acid decarboxylase GADL1 (GADL1) from Homo sapiens (Human).